A 120-amino-acid chain; its full sequence is NAD(P)H-quinone oxidoreductase subunit 3, chloroplastic (120 aa).

3 helical membrane-spanning segments follow: residues 9 to 29, 64 to 84, and 88 to 108; these read IFWAFLIISSAIPVLAFLISG, MFALVFVVFDVETVFLYPWAM, and VLGVSAFIEVFIFVLILILGL.

The protein belongs to the complex I subunit 3 family. NDH is composed of at least 16 different subunits, 5 of which are encoded in the nucleus.

The protein resides in the plastid. The protein localises to the chloroplast thylakoid membrane. The catalysed reaction is a plastoquinone + NADH + (n+1) H(+)(in) = a plastoquinol + NAD(+) + n H(+)(out). It carries out the reaction a plastoquinone + NADPH + (n+1) H(+)(in) = a plastoquinol + NADP(+) + n H(+)(out). Functionally, NDH shuttles electrons from NAD(P)H:plastoquinone, via FMN and iron-sulfur (Fe-S) centers, to quinones in the photosynthetic chain and possibly in a chloroplast respiratory chain. The immediate electron acceptor for the enzyme in this species is believed to be plastoquinone. Couples the redox reaction to proton translocation, and thus conserves the redox energy in a proton gradient. In Arabis hirsuta (Hairy rock-cress), this protein is NAD(P)H-quinone oxidoreductase subunit 3, chloroplastic.